The sequence spans 206 residues: Undecaprenyl-diphosphatase (206 aa).

The next 5 helical transmembrane spans lie at 5–25 (YYWI…LIGG), 53–73 (FLSK…LLIF), 79–99 (IGIT…VSKY), 138–158 (VTLL…EAVL), and 164–184 (VYVG…GSWI).

It localises to the cell membrane. It carries out the reaction di-trans,octa-cis-undecaprenyl diphosphate + H2O = di-trans,octa-cis-undecaprenyl phosphate + phosphate + H(+). The sequence is that of Undecaprenyl-diphosphatase (sepP) from Sulfolobus acidocaldarius (strain ATCC 33909 / DSM 639 / JCM 8929 / NBRC 15157 / NCIMB 11770).